A 511-amino-acid chain; its full sequence is Ribonuclease Y (511 aa).

The helical transmembrane segment at 3–23 (VGILIGIIILGVVGFIQYTLI) threads the bilayer. Residues 201–286 (TVHVVALPND…EMVERAIKDV (86 aa)) form the KH domain. One can recognise an HD domain in the interval 327–420 (VLKHSIEVSY…VQAADAISAA (94 aa)).

It belongs to the RNase Y family.

Its subcellular location is the cell membrane. Functionally, endoribonuclease that initiates mRNA decay. The chain is Ribonuclease Y from Clostridium perfringens (strain SM101 / Type A).